Consider the following 159-residue polypeptide: 2-C-methyl-D-erythritol 2,4-cyclodiphosphate synthase (159 aa).

2 residues coordinate a divalent metal cation: aspartate 10 and histidine 12. 4-CDP-2-C-methyl-D-erythritol 2-phosphate is bound by residues 10–12 (DVH) and 36–37 (HS). Histidine 44 is a binding site for a divalent metal cation. 4-CDP-2-C-methyl-D-erythritol 2-phosphate contacts are provided by residues 58 to 60 (DIG), 134 to 137 (TTTE), phenylalanine 141, and arginine 144.

The protein belongs to the IspF family. In terms of assembly, homotrimer. It depends on a divalent metal cation as a cofactor.

It carries out the reaction 4-CDP-2-C-methyl-D-erythritol 2-phosphate = 2-C-methyl-D-erythritol 2,4-cyclic diphosphate + CMP. It participates in isoprenoid biosynthesis; isopentenyl diphosphate biosynthesis via DXP pathway; isopentenyl diphosphate from 1-deoxy-D-xylulose 5-phosphate: step 4/6. Its function is as follows. Involved in the biosynthesis of isopentenyl diphosphate (IPP) and dimethylallyl diphosphate (DMAPP), two major building blocks of isoprenoid compounds. Catalyzes the conversion of 4-diphosphocytidyl-2-C-methyl-D-erythritol 2-phosphate (CDP-ME2P) to 2-C-methyl-D-erythritol 2,4-cyclodiphosphate (ME-CPP) with a corresponding release of cytidine 5-monophosphate (CMP). The sequence is that of 2-C-methyl-D-erythritol 2,4-cyclodiphosphate synthase from Bacteroides fragilis (strain YCH46).